The primary structure comprises 129 residues: uncharacterized protein (129 aa).

It belongs to the HesB/IscA family.

This is an uncharacterized protein from Buchnera aphidicola subsp. Schizaphis graminum (strain Sg).